The sequence spans 778 residues: Serine/threonine-protein kinase BRSK1 (778 aa).

Over residues 1 to 12 (MSSGAKEGGGGS) the composition is skewed to gly residues. Positions 1 to 29 (MSSGAKEGGGGSPAYHLPHPHPHPPQHAQ) are disordered. A Protein kinase domain is found at 34-285 (YRLEKTLGKG…LEQIQKHPWY (252 aa)). ATP is bound by residues 40–48 (LGKGQTGLV) and Lys-63. The active-site Proton acceptor is Asp-156. Phosphothreonine; by LKB1 is present on Thr-189. In terms of domain architecture, UBA spans 314 to 356 (ELDPDVLESMASLGCFRDRERLHRELRSEEENQEKMIYYLLLD). Residues 362–383 (PSCEDQDLPPRNDVDPPRKRVD) show a composition bias toward basic and acidic residues. The tract at residues 362-548 (PSCEDQDLPP…SPGGGVGGAA (187 aa)) is disordered. Phosphoserine occurs at positions 399, 443, 447, and 450. A compositionally biased stretch (low complexity) spans 430-457 (SRSVSGASTGLSSSPLSSPRSPVFSFSP). Omega-N-methylarginine occurs at positions 466, 481, 484, and 498. A compositionally biased stretch (pro residues) spans 491–508 (QPPPPSARSTPLPGPPGS). Ser-508 carries the phosphoserine modification. Positions 509–533 (PRSSGGTPLHSPLHTPRASPTGTPG) are enriched in low complexity. Arg-525 bears the Omega-N-methylarginine mark. Thr-529 and Thr-535 each carry phosphothreonine. Arg-550 carries the omega-N-methylarginine modification. The residue at position 583 (Thr-583) is a Phosphothreonine. Residues Ser-586, Ser-587, and Ser-601 each carry the phosphoserine modification. A disordered region spans residues 719 to 778 (QPSVQALADEKNGAQTRPAGAPPRSLQPPPGRPDPELSSSPRRGPPKDKKLLATNGTPLP).

It belongs to the protein kinase superfamily. CAMK Ser/Thr protein kinase family. SNF1 subfamily. Mg(2+) is required as a cofactor. Phosphorylated at Thr-189 by STK11/LKB1 in complex with STE20-related adapter-alpha (STRADA) pseudo kinase and CAB39. Not phosphorylated at Thr-189 by CaMKK2. In contrast, it is phosphorylated and activated by CaMKK1. May be inactivated via dephosphorylation of Thr-189 by PP2C. Widely expressed, with highest levels in brain and testis. Protein levels remain constant throughout the cell cycle.

It is found in the cytoplasm. The protein resides in the nucleus. Its subcellular location is the cytoskeleton. The protein localises to the microtubule organizing center. It localises to the centrosome. It is found in the synapse. The protein resides in the presynaptic active zone. Its subcellular location is the cytoplasmic vesicle. The protein localises to the secretory vesicle. It localises to the synaptic vesicle. The enzyme catalyses L-seryl-[protein] + ATP = O-phospho-L-seryl-[protein] + ADP + H(+). It carries out the reaction L-threonyl-[protein] + ATP = O-phospho-L-threonyl-[protein] + ADP + H(+). The catalysed reaction is L-seryl-[tau protein] + ATP = O-phospho-L-seryl-[tau protein] + ADP + H(+). It catalyses the reaction L-threonyl-[tau protein] + ATP = O-phospho-L-threonyl-[tau protein] + ADP + H(+). With respect to regulation, activated by phosphorylation on Thr-189 by STK11/LKB1. Its function is as follows. Serine/threonine-protein kinase that plays a key role in polarization of neurons and centrosome duplication. Phosphorylates CDC25B, CDC25C, MAPT/TAU, RIMS1, TUBG1, TUBG2 and WEE1. Following phosphorylation and activation by STK11/LKB1, acts as a key regulator of polarization of cortical neurons, probably by mediating phosphorylation of microtubule-associated proteins such as MAPT/TAU at 'Thr-529' and 'Ser-579'. Also regulates neuron polarization by mediating phosphorylation of WEE1 at 'Ser-642' in postmitotic neurons, leading to down-regulate WEE1 activity in polarized neurons. In neurons, localizes to synaptic vesicles and plays a role in neurotransmitter release, possibly by phosphorylating RIMS1. Also acts as a positive regulator of centrosome duplication by mediating phosphorylation of gamma-tubulin (TUBG1 and TUBG2) at 'Ser-131', leading to translocation of gamma-tubulin and its associated proteins to the centrosome. Involved in the UV-induced DNA damage checkpoint response, probably by inhibiting CDK1 activity through phosphorylation and activation of WEE1, and inhibition of CDC25B and CDC25C. The chain is Serine/threonine-protein kinase BRSK1 (BRSK1) from Homo sapiens (Human).